The following is a 191-amino-acid chain: Cytochrome c oxidase assembly protein CtaG (191 aa).

The Cytoplasmic portion of the chain corresponds to 1 to 9 (MSLSPHQKT). The chain crosses the membrane as a helical; Signal-anchor for type II membrane protein span at residues 10–30 (AGGLVLVVAVMGAASFAAVPF). Over 31 to 191 (YNWFCRVTGF…LAAESATDVN (161 aa)) the chain is Periplasmic.

The protein belongs to the COX11/CtaG family.

The protein resides in the cell inner membrane. In terms of biological role, exerts its effect at some terminal stage of cytochrome c oxidase synthesis, probably by being involved in the insertion of the copper B into subunit I. The chain is Cytochrome c oxidase assembly protein CtaG from Cereibacter sphaeroides (strain ATCC 17029 / ATH 2.4.9) (Rhodobacter sphaeroides).